Consider the following 520-residue polypeptide: Cytochrome P450 1A1 (520 aa).

Residue F230 coordinates substrate. C464 lines the heme pocket.

Belongs to the cytochrome P450 family. Heme serves as cofactor.

It localises to the endoplasmic reticulum membrane. The protein localises to the microsome membrane. It carries out the reaction an organic molecule + reduced [NADPH--hemoprotein reductase] + O2 = an alcohol + oxidized [NADPH--hemoprotein reductase] + H2O + H(+). Its function is as follows. Cytochromes P450 are a group of heme-thiolate monooxygenases. In liver microsomes, this enzyme is involved in an NADPH-dependent electron transport pathway. It oxidizes a variety of structurally unrelated compounds, including steroids, fatty acids, and xenobiotics. The protein is Cytochrome P450 1A1 (cyp1a1) of Dicentrarchus labrax (European seabass).